A 114-amino-acid polypeptide reads, in one-letter code: UPF0145 protein STK_10800 (114 aa).

This sequence belongs to the UPF0145 family.

The chain is UPF0145 protein STK_10800 from Sulfurisphaera tokodaii (strain DSM 16993 / JCM 10545 / NBRC 100140 / 7) (Sulfolobus tokodaii).